We begin with the raw amino-acid sequence, 227 residues long: MAYPFQLGLQDATSPIMEELMNFHDHTLMIVFLISSLVLYIISLMLTTKLTHTSTMDAQEVETIWTILPAVILILIALPSLRILYMMDEINNPVLTVKTMGHQWYWSYEYTDYEDLCFDSYMIPTNDLKPGELRLLEVDNRVVLPMELPIRMLISSEDVLHSWAVPSLGLKTDAIPGRLNQATVTSNRPGLYYGQCSEICGSNHSFMPIVLEMVPLKNFENWSASMI.

Residues M1–S14 are Mitochondrial intermembrane-facing. Residues P15–M45 traverse the membrane as a helical segment. At L46–Q59 the chain is on the mitochondrial matrix side. The chain crosses the membrane as a helical span at residues E60 to M87. Residues D88 to I227 lie on the Mitochondrial intermembrane side of the membrane. 6 residues coordinate Cu cation: H161, C196, E198, C200, H204, and M207. E198 lines the Mg(2+) pocket.

Belongs to the cytochrome c oxidase subunit 2 family. As to quaternary structure, component of the cytochrome c oxidase (complex IV, CIV), a multisubunit enzyme composed of 14 subunits. The complex is composed of a catalytic core of 3 subunits MT-CO1, MT-CO2 and MT-CO3, encoded in the mitochondrial DNA, and 11 supernumerary subunits COX4I, COX5A, COX5B, COX6A, COX6B, COX6C, COX7A, COX7B, COX7C, COX8 and NDUFA4, which are encoded in the nuclear genome. The complex exists as a monomer or a dimer and forms supercomplexes (SCs) in the inner mitochondrial membrane with NADH-ubiquinone oxidoreductase (complex I, CI) and ubiquinol-cytochrome c oxidoreductase (cytochrome b-c1 complex, complex III, CIII), resulting in different assemblies (supercomplex SCI(1)III(2)IV(1) and megacomplex MCI(2)III(2)IV(2)). Found in a complex with TMEM177, COA6, COX18, COX20, SCO1 and SCO2. Interacts with TMEM177 in a COX20-dependent manner. Interacts with COX20. Interacts with COX16. Requires Cu cation as cofactor.

It is found in the mitochondrion inner membrane. It carries out the reaction 4 Fe(II)-[cytochrome c] + O2 + 8 H(+)(in) = 4 Fe(III)-[cytochrome c] + 2 H2O + 4 H(+)(out). Its function is as follows. Component of the cytochrome c oxidase, the last enzyme in the mitochondrial electron transport chain which drives oxidative phosphorylation. The respiratory chain contains 3 multisubunit complexes succinate dehydrogenase (complex II, CII), ubiquinol-cytochrome c oxidoreductase (cytochrome b-c1 complex, complex III, CIII) and cytochrome c oxidase (complex IV, CIV), that cooperate to transfer electrons derived from NADH and succinate to molecular oxygen, creating an electrochemical gradient over the inner membrane that drives transmembrane transport and the ATP synthase. Cytochrome c oxidase is the component of the respiratory chain that catalyzes the reduction of oxygen to water. Electrons originating from reduced cytochrome c in the intermembrane space (IMS) are transferred via the dinuclear copper A center (CU(A)) of subunit 2 and heme A of subunit 1 to the active site in subunit 1, a binuclear center (BNC) formed by heme A3 and copper B (CU(B)). The BNC reduces molecular oxygen to 2 water molecules using 4 electrons from cytochrome c in the IMS and 4 protons from the mitochondrial matrix. The sequence is that of Cytochrome c oxidase subunit 2 (MT-CO2) from Maxomys bartelsii (Bartels's Javan maxomys).